Here is a 666-residue protein sequence, read N- to C-terminus: Calmodulin-binding receptor kinase CaMRLK (666 aa).

Positions 1 to 17 are cleaved as a signal peptide; that stretch reads MFLKLFLLLSLVSFSHS. The Extracellular portion of the chain corresponds to 18 to 297; it reads DSSSTVSCPN…KTHRTNHTPL (280 aa). 15 N-linked (GlcNAc...) asparagine glycosylation sites follow: N27, N45, N52, N68, N78, N89, N110, N126, N137, N148, N154, N189, N212, N229, and N261. 7 LRR repeats span residues 79-103, 105-127, 130-152, 153-177, 178-197, 198-224, and 226-246; these read LTRL…LWSM, GLVS…PVNG, LSAV…FTGF, TNLT…SLSG, LRHL…PISG, LKSL…NLNH, and QFLN…KYRK. The chain crosses the membrane as a helical span at residues 298–318; that stretch reads VIGLSSSLGALIIVIFAAAII. Residues 319 to 337 are calmodulin binding; that stretch reads LIRRRMKSARTKSRWAISN. The Cytoplasmic segment spans residues 319–666; that stretch reads LIRRRMKSAR…LLKDIRTVSR (348 aa). One can recognise a Protein kinase domain in the interval 395–661; the sequence is FGTESVISDG…QQVLGLLKDI (267 aa). ATP-binding positions include 401–409 and K423; that span reads ISDGTCGPL.

Belongs to the protein kinase superfamily. Ser/Thr protein kinase family. In terms of assembly, binds calmodulin (CaM) in a calcium-dependent manner. Interacts with CAM1, but not with CAM8. Requires Mn(2+) as cofactor. Mg(2+) serves as cofactor. Post-translationally, calmodulin (CaM)-independent autophosphorylation. In terms of tissue distribution, expressed in reproductive and vegetative tissues, with higher levels in seedlings and flowers, but not in leaves.

The protein localises to the cell membrane. It carries out the reaction L-seryl-[protein] + ATP = O-phospho-L-seryl-[protein] + ADP + H(+). The catalysed reaction is L-threonyl-[protein] + ATP = O-phospho-L-threonyl-[protein] + ADP + H(+). With respect to regulation, not stimulated by calmodulin (CaM). In terms of biological role, can phosphorylate the myelin basic protein in vitro. Required for endosperm development in embryos. Maybe involved in auxin and osmotic stress responses. In Arabidopsis thaliana (Mouse-ear cress), this protein is Calmodulin-binding receptor kinase CaMRLK.